Consider the following 527-residue polypeptide: Laccase-5 (527 aa).

An N-terminal signal peptide occupies residues 1–23 (MGKYHSFVNVVALSLSLSGRVFG). The region spanning 25 to 150 (IGPVTDLTIS…DGLRGPLVVY (126 aa)) is the Plastocyanin-like 1 domain. Residues Asn-74 and Asn-77 are each glycosylated (N-linked (GlcNAc...) asparagine). Positions 87, 89, 132, and 134 each coordinate Cu cation. Disulfide bonds link Cys-108–Cys-516 and Cys-140–Cys-230. Asn-156, Asn-209, Asn-233, Asn-242, Asn-276, Asn-317, Asn-358, Asn-366, Asn-393, and Asn-402 each carry an N-linked (GlcNAc...) asparagine glycan. Positions 162-306 (VDDDTTVITL…GGVNSAILRY (145 aa)) constitute a Plastocyanin-like 2 domain. Positions 373-498 (TVPVLLQILS…AGFAIVWGED (126 aa)) constitute a Plastocyanin-like 3 domain. Residues His-425, His-428, His-430, His-480, Cys-481, His-482, and His-486 each contribute to the Cu cation site.

It belongs to the multicopper oxidase family. Homodimer. It depends on Cu cation as a cofactor.

Its subcellular location is the secreted. The enzyme catalyses 4 hydroquinone + O2 = 4 benzosemiquinone + 2 H2O. Lignin degradation and detoxification of lignin-derived products. The chain is Laccase-5 (LCC5) from Trametes villosa (White-rot fungus).